Consider the following 731-residue polypeptide: E3 ubiquitin-protein ligase SMURF1 (731 aa).

The 120-residue stretch at 1–120 folds into the C2 domain; the sequence is MSNPGTRRNG…TGYQRLDLCK (120 aa). Residue serine 200 is modified to Phosphoserine. The interval 216-237 is disordered; it reads EVRGPLQTPQNRPHGHQSPELP. WW domains follow at residues 234 to 267 and 280 to 313; these read PELPEGYEQRTTVQGQVYFLHTQTGVSTWHDPRI and GPLPPGWEVRSTVSGRIYFVDHNNRTTQFTDPRL. Glycyl lysine isopeptide (Lys-Gly) (interchain with G-Cter in ubiquitin) cross-links involve residues lysine 355 and lysine 357. In terms of domain architecture, HECT spans 394 to 731; sequence RPKDLKKRLM…VEETCGFAVE (338 aa). The active-site Glycyl thioester intermediate is cysteine 699.

In terms of assembly, interacts with TRAF4. Interacts (via HECT domain) with FBXL15 (via LRR repeats). Interacts with SMAD7 and TGFBR1; SMAD7 recruits SMURF1 to TGFBR1 and regulates TGF-beta receptor degradation. Interacts with MAVS; the interaction is mediated by NDFIP1. Post-translationally, auto-ubiquitinated in presence of NDFIP1. Ubiquitinated by the SCF(FBXL15) complex at Lys-355 and Lys-357, leading to its degradation by the proteasome. Lys-357 is the primary ubiquitination site.

It is found in the cytoplasm. It localises to the cell membrane. The catalysed reaction is S-ubiquitinyl-[E2 ubiquitin-conjugating enzyme]-L-cysteine + [acceptor protein]-L-lysine = [E2 ubiquitin-conjugating enzyme]-L-cysteine + N(6)-ubiquitinyl-[acceptor protein]-L-lysine.. Its pathway is protein modification; protein ubiquitination. E3 ubiquitin-protein ligase that acts as a negative regulator of BMP signaling pathway. Mediates ubiquitination and degradation of SMAD1 and SMAD5, 2 receptor-regulated SMADs specific for the BMP pathway. Promotes ubiquitination and subsequent proteasomal degradation of TRAF family members and RHOA. Promotes ubiquitination and subsequent proteasomal degradation of MAVS. Acts as an antagonist of TGF-beta signaling by ubiquitinating TGFBR1 and targeting it for degradation. Plays a role in dendrite formation by melanocytes. The polypeptide is E3 ubiquitin-protein ligase SMURF1 (Smurf1) (Mus musculus (Mouse)).